A 356-amino-acid polypeptide reads, in one-letter code: MSHALSDGPAPSGALESVMTLEQFILDRRGRFPQSTGAFSRLLRDVSVAAKIINHNIRRAGILDVMGESGTVNVQDEKQKKLDEIADRELERALRRGGECCLVGSEEQADTISLSPRGDFQERFAVFFDPLDGSSNTDVNASVGTIFSVYTLPEGADEGDALDVALRPGAEQVAAGYVAYGSSTMFVFTTGNGVNGFTLDPGIGEFLLTHPDLQIPQAPAMYSINEADIEDFSPELRAFLQWLKTKDPDTGHRIRARYIGSFVSDFHRNLLTGGLYMYPATSDHPDGKLRLMYEANPMAFLVEQAGGRASTGHQRILDLQPEGLHERTPLFIGSAPLVKAAEAYLQGRGAEAVGGA.

E106, D129, L131, and D132 together coordinate Mg(2+). Substrate contacts are provided by residues 132-135 (DGSS), N225, Y258, and K288. E294 is a Mg(2+) binding site.

The protein belongs to the FBPase class 1 family. In terms of assembly, homotetramer. The cofactor is Mg(2+).

It localises to the cytoplasm. The catalysed reaction is beta-D-fructose 1,6-bisphosphate + H2O = beta-D-fructose 6-phosphate + phosphate. Its pathway is carbohydrate biosynthesis; gluconeogenesis. The chain is Fructose-1,6-bisphosphatase class 1 1 from Salinibacter ruber (strain DSM 13855 / M31).